A 262-amino-acid chain; its full sequence is PsbP domain-containing protein 6, chloroplastic (262 aa).

Cys128 and Cys132 are disulfide-bonded.

This sequence belongs to the PsbP family.

It localises to the plastid. It is found in the chloroplast thylakoid lumen. Functionally, may be involved in the redox regulation of photosystem II. The chain is PsbP domain-containing protein 6, chloroplastic (PPD6) from Arabidopsis thaliana (Mouse-ear cress).